The chain runs to 102 residues: Putative RNA-binding protein RbpA (102 aa).

An RRM domain is found at 2-79 (SIYVGNLSYE…RDLKVNKAKP (78 aa)). Residues 73–84 (KVNKAKPREDRG) are compositionally biased toward basic and acidic residues. The tract at residues 73–102 (KVNKAKPREDRGPSGGNRGGYGGGGGRNRY) is disordered. The span at 85 to 102 (PSGGNRGGYGGGGGRNRY) shows a compositional bias: gly residues.

The protein is Putative RNA-binding protein RbpA (rbpA) of Nostoc sp. (strain PCC 7120 / SAG 25.82 / UTEX 2576).